A 995-amino-acid polypeptide reads, in one-letter code: Bifunctional glutamine synthetase adenylyltransferase/adenylyl-removing enzyme (995 aa).

The interval 1–487 (MNVTKPATQR…LHAKLFYQPL (487 aa)) is adenylyl removase. Residues 492 to 995 (APAGLEIAGR…KAVVRKVFGS (504 aa)) are adenylyl transferase.

It belongs to the GlnE family. Requires Mg(2+) as cofactor.

It catalyses the reaction [glutamine synthetase]-O(4)-(5'-adenylyl)-L-tyrosine + phosphate = [glutamine synthetase]-L-tyrosine + ADP. It carries out the reaction [glutamine synthetase]-L-tyrosine + ATP = [glutamine synthetase]-O(4)-(5'-adenylyl)-L-tyrosine + diphosphate. Functionally, involved in the regulation of glutamine synthetase GlnA, a key enzyme in the process to assimilate ammonia. When cellular nitrogen levels are high, the C-terminal adenylyl transferase (AT) inactivates GlnA by covalent transfer of an adenylyl group from ATP to specific tyrosine residue of GlnA, thus reducing its activity. Conversely, when nitrogen levels are low, the N-terminal adenylyl removase (AR) activates GlnA by removing the adenylyl group by phosphorolysis, increasing its activity. The regulatory region of GlnE binds the signal transduction protein PII (GlnB) which indicates the nitrogen status of the cell. In Mycobacterium marinum (strain ATCC BAA-535 / M), this protein is Bifunctional glutamine synthetase adenylyltransferase/adenylyl-removing enzyme.